Here is a 531-residue protein sequence, read N- to C-terminus: O-phosphoserine--tRNA(Cys) ligase (531 aa).

Residues H189–T191, S234–S236, Y276–Y277, and N319 contribute to the substrate site.

This sequence belongs to the class-II aminoacyl-tRNA synthetase family. O-phosphoseryl-tRNA(Cys) synthetase subfamily. In terms of assembly, homotetramer. Interacts with SepCysS.

It carries out the reaction tRNA(Cys) + O-phospho-L-serine + ATP = O-phospho-L-seryl-tRNA(Cys) + AMP + diphosphate. In terms of biological role, catalyzes the attachment of O-phosphoserine (Sep) to tRNA(Cys). In Methanospirillum hungatei JF-1 (strain ATCC 27890 / DSM 864 / NBRC 100397 / JF-1), this protein is O-phosphoserine--tRNA(Cys) ligase.